We begin with the raw amino-acid sequence, 142 residues long: Cytochrome c-type biogenesis protein CcmE (142 aa).

Over M1–K2 the chain is Cytoplasmic. Residues G3–G23 traverse the membrane as a helical; Signal-anchor for type II membrane protein segment. The Periplasmic portion of the chain corresponds to L24–Q142. Heme-binding residues include H118 and Y122.

It belongs to the CcmE/CycJ family.

It localises to the cell inner membrane. Its function is as follows. Heme chaperone required for the biogenesis of c-type cytochromes. Transiently binds heme delivered by CcmC and transfers the heme to apo-cytochromes in a process facilitated by CcmF and CcmH. This chain is Cytochrome c-type biogenesis protein CcmE, found in Thermus thermophilus (strain ATCC BAA-163 / DSM 7039 / HB27).